The primary structure comprises 57 residues: MKMSIVIILLLFTCLIATNGASGTKCSGSPECVKFCRTKGCRNGKCMNRSCKCYLCS.

The first 23 residues, 1–23 (MKMSIVIILLLFTCLIATNGASG), serve as a signal peptide directing secretion. Intrachain disulfides connect cysteine 26–cysteine 46, cysteine 32–cysteine 51, cysteine 36–cysteine 53, and cysteine 41–cysteine 56.

Belongs to the short scorpion toxin superfamily. Potassium channel inhibitor family. Alpha-KTx 23 subfamily. In terms of tissue distribution, expressed by the venom gland.

It is found in the secreted. Its function is as follows. This toxin shows both immunosuppressive and anti-inflammatory activities. It has the potential to inhibit human T cell activation, since it reduces IL-2 secretion and the expression of T cell activation marker CD69 and acts as an anti-inflammatory agent, since it provokes the reduction of secretion of both IFN-gamma and TNF-alpha. In vivo, the delayed-type hypersensitivity response in rat autoimmune disease model is ameliorated in the presence of this toxin. Acts by blocking Kv1.3/KCNA3 potassium channels of T-lymphocytes. The polypeptide is Potassium channel toxin alpha-KTx 23.3 (Scorpiops tibetanus (Scorpion)).